A 339-amino-acid polypeptide reads, in one-letter code: Alpha-N-dichloroacetyl-p-aminophenylserinol N-oxygenase (339 aa).

A compositionally biased stretch (basic and acidic residues) spans 1-19; that stretch reads MRDHTDEKSEAAGNDDGHV. A disordered region spans residues 1–22; the sequence is MRDHTDEKSEAAGNDDGHVRIG. Glu-109, Glu-144, His-147, Glu-205, His-232, Glu-236, and His-239 together coordinate Fe cation.

This sequence belongs to the AurF N-oxygenase family. Fe(2+) serves as cofactor.

The enzyme catalyses alpha-N-dichloroacetyl-p-aminophenylserinol + AH2 + 2 O2 = chloramphenicol + A + 2 H2O. Its pathway is antibiotic biosynthesis. Its function is as follows. Involved in chloramphenicol biosynthesis. Catalyzes the six-electron oxidation of an aryl-amine precursor of chloramphenicol (NH2-CAM) to yield the aryl-nitro group of chloramphenicol (CAM). During catalysis, upon exposure of the diferrous cluster to O(2), ClmI forms an exceptionally long-lived peroxo intermediate (CmlI-peroxo), which reacts with NH2-CAM to form CAM. The sequence is that of Alpha-N-dichloroacetyl-p-aminophenylserinol N-oxygenase from Streptomyces venezuelae (strain ATCC 10712 / CBS 650.69 / DSM 40230 / JCM 4526 / NBRC 13096 / PD 04745).